Reading from the N-terminus, the 313-residue chain is D-alanine--D-alanine ligase (313 aa).

The ATP-grasp domain maps to 107-303 (KQAFAAAGLT…FEALVEQIAC (197 aa)). 135-188 (PFGLPVVVKPVQEGSSVGVTIVKKPEDLQAALDEAFRYDTLVLVEKYIKGQEVQ) contacts ATP. Mg(2+) is bound by residues Asp256, Glu269, and Asn271.

Belongs to the D-alanine--D-alanine ligase family. Mg(2+) is required as a cofactor. The cofactor is Mn(2+).

It localises to the cytoplasm. The catalysed reaction is 2 D-alanine + ATP = D-alanyl-D-alanine + ADP + phosphate + H(+). Its pathway is cell wall biogenesis; peptidoglycan biosynthesis. In terms of biological role, cell wall formation. The sequence is that of D-alanine--D-alanine ligase from Trichlorobacter lovleyi (strain ATCC BAA-1151 / DSM 17278 / SZ) (Geobacter lovleyi).